We begin with the raw amino-acid sequence, 474 residues long: Synaptotagmin-17 (474 aa).

Residues 60 to 112 are disordered; sequence WLMASRSSDKDGDSVHTASEVPLTPRTNSPDGRRSSSDTSKSTYSLTRRISSL. A compositionally biased stretch (low complexity) spans 96–112; it reads SDTSKSTYSLTRRISSL. Phosphoserine is present on residues serine 118 and serine 119. C2 domains are found at residues 184–310 and 321–455; these read QLGM…HWWK and ELGE…EQWH.

The protein belongs to the synaptotagmin family. Expressed abundantly in brain (frontal and temporal lobes, hippocampus, hypothalamus, amygdala, substantia nigra, and pituitary), kidney, and prostate. Expressed in fetal brain, kidney and lung. Expressed in melanocytes.

The protein localises to the membrane. Its function is as follows. Plays a role in dendrite formation by melanocytes. This chain is Synaptotagmin-17 (SYT17), found in Homo sapiens (Human).